A 423-amino-acid chain; its full sequence is Salicylate 5-hydroxylase, large oxygenase component (423 aa).

The disordered stretch occupies residues 1–20 (MSEPQRLKPVFPQDPKWPGE). In terms of domain architecture, Rieske spans 49–168 (WCYVGLEAEI…VAARGGAVFA (120 aa)). Residues C91, H93, C111, and H114 each coordinate [2Fe-2S] cluster. H224, H229, and D370 together coordinate Fe cation.

It belongs to the bacterial ring-hydroxylating dioxygenase alpha subunit family. The salicylate 5-hydroxylase (S5H) multicomponent enzyme system is composed of an electron transfer component and an oxygenase component. The electron transfer component is comprised of a ferredoxin reductase (NagAa) and a ferredoxin (NagAb), and the oxygenase component is formed by a large subunit (NagG) and a small subunit (NagH). Fe cation is required as a cofactor. Requires [2Fe-2S] cluster as cofactor.

The catalysed reaction is salicylate + NADH + O2 + H(+) = 2,5-dihydroxybenzoate + NAD(+) + H2O. The protein operates within aromatic compound metabolism; naphthalene degradation. Oxygenase component of the salicylate 5-hydroxylase (S5H) multicomponent enzyme system which catalyzes the 5-hydroxylation of salicylate to gentisate. Active only on substrates with a ring-substituted carboxylate group with an adjacent hydroxyl group. Primarily active against salicylate and substituted salicylates, but not against 2-hydroxycinnamate, 3-hydroxycinnamate, 2-hydroxyphenylacetate, 3-hydroxyphenylacetate, 2-hydroxybenzophenone, 1-hydroxy-2-naphthoate, 4-methoxysalicylate or 2-hydroxyacetophenone. The sequence is that of Salicylate 5-hydroxylase, large oxygenase component from Ralstonia sp.